Consider the following 545-residue polypeptide: CTP synthase (545 aa).

The segment at Met1–Leu266 is amidoligase domain. Ser14 lines the CTP pocket. Ser14 serves as a coordination point for UTP. Residues Ser15–Ile20 and Asp72 each bind ATP. Asp72 and Glu140 together coordinate Mg(2+). Residues Asp147–Glu149, Lys187–Gln192, and Lys223 each bind CTP. UTP is bound by residues Lys187–Gln192 and Lys223. Lys239–Val241 serves as a coordination point for ATP. Residues Ser291 to Asp542 enclose the Glutamine amidotransferase type-1 domain. L-glutamine is bound at residue Gly352. Cys379 acts as the Nucleophile; for glutamine hydrolysis in catalysis. L-glutamine is bound by residues Leu380–Gln383, Glu403, and Arg470. Catalysis depends on residues His515 and Glu517.

It belongs to the CTP synthase family. As to quaternary structure, homotetramer.

The catalysed reaction is UTP + L-glutamine + ATP + H2O = CTP + L-glutamate + ADP + phosphate + 2 H(+). The enzyme catalyses L-glutamine + H2O = L-glutamate + NH4(+). It carries out the reaction UTP + NH4(+) + ATP = CTP + ADP + phosphate + 2 H(+). Its pathway is pyrimidine metabolism; CTP biosynthesis via de novo pathway; CTP from UDP: step 2/2. With respect to regulation, allosterically activated by GTP, when glutamine is the substrate; GTP has no effect on the reaction when ammonia is the substrate. The allosteric effector GTP functions by stabilizing the protein conformation that binds the tetrahedral intermediate(s) formed during glutamine hydrolysis. Inhibited by the product CTP, via allosteric rather than competitive inhibition. Its function is as follows. Catalyzes the ATP-dependent amination of UTP to CTP with either L-glutamine or ammonia as the source of nitrogen. Regulates intracellular CTP levels through interactions with the four ribonucleotide triphosphates. The sequence is that of CTP synthase from Hamiltonella defensa subsp. Acyrthosiphon pisum (strain 5AT).